The primary structure comprises 375 residues: Aminomethyltransferase (375 aa).

It belongs to the GcvT family. As to quaternary structure, the glycine cleavage system is composed of four proteins: P, T, L and H.

It catalyses the reaction N(6)-[(R)-S(8)-aminomethyldihydrolipoyl]-L-lysyl-[protein] + (6S)-5,6,7,8-tetrahydrofolate = N(6)-[(R)-dihydrolipoyl]-L-lysyl-[protein] + (6R)-5,10-methylene-5,6,7,8-tetrahydrofolate + NH4(+). Functionally, the glycine cleavage system catalyzes the degradation of glycine. The chain is Aminomethyltransferase from Cupriavidus metallidurans (strain ATCC 43123 / DSM 2839 / NBRC 102507 / CH34) (Ralstonia metallidurans).